The chain runs to 109 residues: Nascent polypeptide-associated complex protein (109 aa).

The region spanning 3–70 (PMNPKQMKKM…YEVVKRPPKI (68 aa)) is the NAC-A/B domain.

The protein belongs to the NAC-alpha family. Homodimer. Interacts with the ribosome. Binds ribosomal RNA.

Functionally, contacts the emerging nascent chain on the ribosome. The protein is Nascent polypeptide-associated complex protein of Archaeoglobus fulgidus (strain ATCC 49558 / DSM 4304 / JCM 9628 / NBRC 100126 / VC-16).